Consider the following 497-residue polypeptide: Glutamyl-tRNA reductase (497 aa).

Substrate-binding positions include 58-61, Ser118, 123-125, and Gln129; these read TCNR and EQQ. Cys59 serves as the catalytic Nucleophile. 214–219 is a binding site for NADP(+); the sequence is GAGAMA. Polar residues predominate over residues 461–477; the sequence is VTQPGQADSSAAQTAGT. The tract at residues 461–486 is disordered; it reads VTQPGQADSSAAQTAGTSARADQIPS.

It belongs to the glutamyl-tRNA reductase family. As to quaternary structure, homodimer.

The enzyme catalyses (S)-4-amino-5-oxopentanoate + tRNA(Glu) + NADP(+) = L-glutamyl-tRNA(Glu) + NADPH + H(+). The protein operates within porphyrin-containing compound metabolism; protoporphyrin-IX biosynthesis; 5-aminolevulinate from L-glutamyl-tRNA(Glu): step 1/2. Its function is as follows. Catalyzes the NADPH-dependent reduction of glutamyl-tRNA(Glu) to glutamate 1-semialdehyde (GSA). In Corynebacterium jeikeium (strain K411), this protein is Glutamyl-tRNA reductase.